The chain runs to 275 residues: Nitrate import permease protein NrtB (275 aa).

7 helical membrane-spanning segments follow: residues Val25–Gly45, Val89–Ser109, Ile120–Leu140, Ala147–Ala167, Phe189–Ile209, Trp213–Trp233, and Ser238–Leu258. Residues Ile82–Ile262 form the ABC transmembrane type-1 domain.

The protein belongs to the binding-protein-dependent transport system permease family. CysTW subfamily. The complex is composed of two ATP-binding proteins (NrtC and NrtD), two transmembrane proteins (NrtB) and a solute-binding protein (NrtA).

Its subcellular location is the cell inner membrane. Functionally, part of the ABC transporter complex NrtABCD involved in nitrate uptake. The complex is probably also involved in nitrite transport. Probably responsible for the translocation of the substrate across the membrane. The protein is Nitrate import permease protein NrtB (nrtB) of Synechocystis sp. (strain ATCC 27184 / PCC 6803 / Kazusa).